A 544-amino-acid chain; its full sequence is DNA mismatch repair protein MutL (544 aa).

It belongs to the DNA mismatch repair MutL/HexB family.

This protein is involved in the repair of mismatches in DNA. It is required for dam-dependent methyl-directed DNA mismatch repair. May act as a 'molecular matchmaker', a protein that promotes the formation of a stable complex between two or more DNA-binding proteins in an ATP-dependent manner without itself being part of a final effector complex. The protein is DNA mismatch repair protein MutL of Thermodesulfovibrio yellowstonii (strain ATCC 51303 / DSM 11347 / YP87).